The sequence spans 440 residues: Xylose isomerase (440 aa).

Residues H101 and D104 contribute to the active site. E232, E268, H271, D296, D307, D309, and D339 together coordinate Mg(2+).

It belongs to the xylose isomerase family. As to quaternary structure, homotetramer. Mg(2+) serves as cofactor.

The protein localises to the cytoplasm. The catalysed reaction is alpha-D-xylose = alpha-D-xylulofuranose. The polypeptide is Xylose isomerase (Salmonella typhi).